The chain runs to 319 residues: BTB/POZ domain-containing adapter for CUL3-mediated RhoA degradation protein 2 (319 aa).

The 69-residue stretch at 31 to 99 (KYIRLNVGGC…LRDDTITLPK (69 aa)) folds into the BTB domain.

Belongs to the BACURD family. As to quaternary structure, component of the BCR(TNFAIP1) E3 ubiquitin ligase complex, at least composed of cul3, tnfaip1/bacurd2 and rbx1.

It is found in the cytoplasm. The protein resides in the nucleus. The protein localises to the endosome. The protein operates within protein modification; protein ubiquitination. In terms of biological role, substrate-specific adapter of a BCR (BTB-CUL3-RBX1) E3 ubiquitin-protein ligase complex involved in regulation of cytoskeleton structure. The BCR(TNFAIP1) E3 ubiquitin ligase complex mediates the ubiquitination of target proteins, leading to their degradation by the proteasome. In Xenopus tropicalis (Western clawed frog), this protein is BTB/POZ domain-containing adapter for CUL3-mediated RhoA degradation protein 2 (tnfaip1).